The sequence spans 231 residues: Fibronectin type III domain-containing protein 4 (231 aa).

The N-terminal stretch at 1 to 40 (MPLAPPANSVETMASLMPLSPYLSPTVLLLVSCDLGFVRA) is a signal peptide. The Extracellular segment spans residues 41-163 (DRPPSPVNVT…GLDGERPLQT (123 aa)). The region spanning 43–136 (PPSPVNVTVT…PRVHFRTLKG (94 aa)) is the Fibronectin type-III domain. N-linked (GlcNAc...) asparagine glycosylation is found at Asn48 and Asn143. The interval 118–156 (GLRGESPPGPRVHFRTLKGSDRLPSNSSSPGDITVEGLD) is disordered. A helical membrane pass occupies residues 164-184 (GEVVIIVVVLLMWAAVIGLFC). The Cytoplasmic segment spans residues 185–231 (RQYDIIKDNDSNNNPKEKGKGPEQSPQGRPVGTTRQKKSPSINTIDV). The span at 193–205 (NDSNNNPKEKGKG) shows a compositional bias: basic and acidic residues. Residues 193–231 (NDSNNNPKEKGKGPEQSPQGRPVGTTRQKKSPSINTIDV) are disordered.

In terms of tissue distribution, predominantly expressed in the liver and in the brain, including in the cortex, hypothalamus and hippocampus. Also expressed in heart, lung, kidney and testis. In the colon, expressed in the epithelium and in a subset of immune cells in lymphoid aggregates.

The protein localises to the membrane. Its subcellular location is the secreted. Functionally, has anti-inflammatory properties. In the colon, acts on macrophages to down-regulate inflammation. May suppress osteoclastogenesis and mature osteoclast resorptive function. In white adipose tissue, decreases local inflammation, via interaction with GPR116. Also required for proper systemic glucose tolerance, specifically sensitizing white adipocytes to insulin and promoting glucose uptake. The insulin sensitizing function in adipose tissue is mediated by interaction with ADGRF5/GPR116 and activation of cAMP signaling. The protein is Fibronectin type III domain-containing protein 4 (Fndc4) of Mus musculus (Mouse).